The sequence spans 78 residues: Defensin-like protein 201 (78 aa).

A signal peptide spans 1 to 22; sequence MRNLINFAVLIMTIFIVSASGA. Cystine bridges form between cysteine 32/cysteine 78, cysteine 41/cysteine 61, cysteine 46/cysteine 71, and cysteine 50/cysteine 73.

Belongs to the DEFL family.

The protein localises to the secreted. The polypeptide is Defensin-like protein 201 (Arabidopsis thaliana (Mouse-ear cress)).